The following is a 628-amino-acid chain: Putative ankyrin repeat protein L769 (628 aa).

4 ANK repeats span residues 217–246 (NYMDILKQACFFGSTEIINYVLNKGIEYDF), 333–362 (DLDEIMIEALRYNFTELIDWCINNGSDINR), 421–451 (TAENIIHNIIENRPHIQVLKYLLSEITNHDL), and 512–542 (NNLKILFVTMMSNNIDMLEFLLEINNYDQDY).

The protein is Putative ankyrin repeat protein L769 of Acanthamoeba polyphaga mimivirus (APMV).